The chain runs to 236 residues: Leucyl/phenylalanyl-tRNA--protein transferase (236 aa).

A compositionally biased stretch (polar residues) spans Met1–Ser13. Positions Met1–Ser22 are disordered.

Belongs to the L/F-transferase family.

It is found in the cytoplasm. The enzyme catalyses N-terminal L-lysyl-[protein] + L-leucyl-tRNA(Leu) = N-terminal L-leucyl-L-lysyl-[protein] + tRNA(Leu) + H(+). It catalyses the reaction N-terminal L-arginyl-[protein] + L-leucyl-tRNA(Leu) = N-terminal L-leucyl-L-arginyl-[protein] + tRNA(Leu) + H(+). It carries out the reaction L-phenylalanyl-tRNA(Phe) + an N-terminal L-alpha-aminoacyl-[protein] = an N-terminal L-phenylalanyl-L-alpha-aminoacyl-[protein] + tRNA(Phe). Its function is as follows. Functions in the N-end rule pathway of protein degradation where it conjugates Leu, Phe and, less efficiently, Met from aminoacyl-tRNAs to the N-termini of proteins containing an N-terminal arginine or lysine. This is Leucyl/phenylalanyl-tRNA--protein transferase from Shewanella piezotolerans (strain WP3 / JCM 13877).